We begin with the raw amino-acid sequence, 951 residues long: Leucine-rich repeat-containing G-protein coupled receptor 4 (951 aa).

The first 19 residues, 1–19 (MPGPLGLLCFLALGLRGSA), serve as a signal peptide directing secretion. The Extracellular segment spans residues 20–544 (EPSGAAPPLC…LLGSWMIRLT (525 aa)). An LRRNT domain is found at 25–57 (APPLCAAPCSCDGDRRVDCSGKGLTAVPEGLSA). 2 disulfide bridges follow: Cys-29/Cys-35 and Cys-33/Cys-43. LRR repeat units lie at residues 35–58 (CDGD…LSAF), 59–79 (TQLL…AFKN), 81–103 (PFLE…ALSG), 104–127 (LKEL…AIRG), 128–151 (LSSL…SFEG), 153–175 (TQLR…PLSN), 176–199 (LPTL…AFTN), 201–223 (SSLV…CFDG), 224–247 (LDNL…IKAL), 248–270 (PSLK…AFDG), and 272–294 (PLLK…AFHN). N-linked (GlcNAc...) asparagine glycosylation is present at Asn-68. N-linked (GlcNAc...) asparagine glycosylation is present at Asn-199. 2 N-linked (GlcNAc...) asparagine glycosylation sites follow: Asn-294 and Asn-314. 5 LRR repeats span residues 318–341 (TVRL…LCQE), 342–363 (QKRL…SFNG), 364–387 (CHAL…TFQG), 388–411 (LTSL…AFAK), and 413–435 (GSIT…GLNG). Cys-339 and Cys-364 are disulfide-bonded. 2 disulfide bridges follow: Cys-470/Cys-522 and Cys-471/Cys-476. The chain crosses the membrane as a helical span at residues 545–565 (VWFIFLVALFFNLLVILTTFA). The Cytoplasmic portion of the chain corresponds to 566 to 575 (SCTSVPSSKL). The helical transmembrane segment at 576–596 (FIGLISVSNLFMGAYTGILTF) threads the bilayer. The Extracellular segment spans residues 597–619 (LDAVSWGRFAEFGIWWEIGSGCK). The cysteines at positions 618 and 693 are disulfide-linked. Residues 620-640 (IAGFLAVFSSESAIFLLMLAA) traverse the membrane as a helical segment. Over 641 to 661 (VERSLSAKDMMKNGKSNHLRQ) the chain is Cytoplasmic. A helical membrane pass occupies residues 662–682 (FRIAALLAFLGAAVAGSFPLF). The Extracellular segment spans residues 683 to 703 (HRGEYSASPLCLPFPTGETPS). The helical transmembrane segment at 704 to 724 (LGFTVTLVLLNSLAFLLMAII) threads the bilayer. The Cytoplasmic portion of the chain corresponds to 725-756 (YTKLYCNLEKEDLSESSQSSMIKHVAWLIFTN). A helical membrane pass occupies residues 757 to 777 (CIFFCPVAFFSFAPLITAVSI). Topologically, residues 778 to 783 (SPEIMK) are extracellular. Residues 784–804 (SVTLIFFPLPACLNPVLYVFF) traverse the membrane as a helical segment. Topologically, residues 805-951 (NPKFKEDWKL…YAYNLPRVKD (147 aa)) are cytoplasmic. At Ser-920 the chain carries Phosphoserine.

This sequence belongs to the G-protein coupled receptor 1 family.

The protein localises to the cell membrane. In terms of biological role, receptor for R-spondins that potentiates the canonical Wnt signaling pathway and is involved in the formation of various organs. Upon binding to R-spondins (RSPO1, RSPO2, RSPO3 or RSPO4), associates with phosphorylated LRP6 and frizzled receptors that are activated by extracellular Wnt receptors, triggering the canonical Wnt signaling pathway to increase expression of target genes. In contrast to classical G-protein coupled receptors, does not activate heterotrimeric G-proteins to transduce the signal. Its function as activator of the Wnt signaling pathway is required for the development of various organs, including liver, kidney, intestine, bone, reproductive tract and eye. May also act as a receptor for norrin (NDP), such results however required additional confirmation in vivo. Required during spermatogenesis to activate the Wnt signaling pathway in peritubular myoid cells. Required for the maintenance of intestinal stem cells and Paneth cell differentiation in postnatal intestinal crypts. Acts as a regulator of bone formation and remodeling. Involved in kidney development; required for maintaining the ureteric bud in an undifferentiated state. Involved in the development of the anterior segment of the eye. Required during erythropoiesis. Also acts as a negative regulator of innate immunity by inhibiting TLR2/TLR4 associated pattern-recognition and pro-inflammatory cytokine production. Plays an important role in regulating the circadian rhythms of plasma lipids, partially through regulating the rhythmic expression of MTTP. Required for proper development of GnRH neurons (gonadotropin-releasing hormone expressing neurons) that control the release of reproductive hormones from the pituitary gland. The polypeptide is Leucine-rich repeat-containing G-protein coupled receptor 4 (LGR4) (Bos taurus (Bovine)).